Reading from the N-terminus, the 93-residue chain is Cell division topological specificity factor (93 aa).

It belongs to the MinE family.

Prevents the cell division inhibition by proteins MinC and MinD at internal division sites while permitting inhibition at polar sites. This ensures cell division at the proper site by restricting the formation of a division septum at the midpoint of the long axis of the cell. The sequence is that of Cell division topological specificity factor from Syntrophus aciditrophicus (strain SB).